We begin with the raw amino-acid sequence, 152 residues long: UPF0178 protein SAB0630c (152 aa).

This sequence belongs to the UPF0178 family.

In Staphylococcus aureus (strain bovine RF122 / ET3-1), this protein is UPF0178 protein SAB0630c.